The chain runs to 257 residues: Short-chain dehydrogenase reductase 3a (257 aa).

Residue 12 to 36 participates in NAD(+) binding; the sequence is IITGGASGIGAEAVRLFTDHGAKVV. Position 144 (serine 144) interacts with substrate. The active-site Proton acceptor is the tyrosine 157.

It belongs to the short-chain dehydrogenases/reductases (SDR) family. In terms of tissue distribution, highly expressed in the radicle tip, lateral root primordia and tips, and the area surrounding the cotyledon hydathode of young seedlings.

In terms of biological role, confers resistance to the incompatible pathogenic bacteria P.syringae pv. tomato DC3000 in a PR1-dependent manner. Seems not involved in abscisic acid (ABA) biosynthesis. The protein is Short-chain dehydrogenase reductase 3a (SDR3a) of Arabidopsis thaliana (Mouse-ear cress).